We begin with the raw amino-acid sequence, 285 residues long: Nucleotide-binding protein Avin_12760 (285 aa).

8-15 (GRSGSGKS) lines the ATP pocket. 60-63 (DARN) provides a ligand contact to GTP.

Belongs to the RapZ-like family.

Its function is as follows. Displays ATPase and GTPase activities. The chain is Nucleotide-binding protein Avin_12760 from Azotobacter vinelandii (strain DJ / ATCC BAA-1303).